The chain runs to 160 residues: Ribonuclease ARB_07070 (160 aa).

A signal peptide spans 1 to 18; sequence MVSFKAILTLSLIGAAFA. A disordered region spans residues 26–51; sequence AEPVEDSGAVANSPEGSGMDLGGTDP. The active-site Proton acceptor is the E103. H144 acts as the Proton donor in catalysis.

This sequence belongs to the ribonuclease U2 family.

Its subcellular location is the secreted. Its function is as follows. This purine-specific ribonuclease cleaves 28S RNA in eukaryotic ribosomes, inhibits protein synthesis, and shows antitumor activity. In Arthroderma benhamiae (strain ATCC MYA-4681 / CBS 112371) (Trichophyton mentagrophytes), this protein is Ribonuclease ARB_07070.